We begin with the raw amino-acid sequence, 206 residues long: Small ribosomal subunit protein uS4 (206 aa).

The S4 RNA-binding domain occupies 96–159 (TRLDNVVYRM…KKQARISASL (64 aa)).

The protein belongs to the universal ribosomal protein uS4 family. In terms of assembly, part of the 30S ribosomal subunit. Contacts protein S5. The interaction surface between S4 and S5 is involved in control of translational fidelity.

One of the primary rRNA binding proteins, it binds directly to 16S rRNA where it nucleates assembly of the body of the 30S subunit. Its function is as follows. With S5 and S12 plays an important role in translational accuracy. This chain is Small ribosomal subunit protein uS4, found in Shewanella violacea.